A 602-amino-acid polypeptide reads, in one-letter code: Elongation factor 4 (602 aa).

In terms of domain architecture, tr-type G spans 7 to 189; the sequence is KRVRNFSIIA…AVVEKVPYPK (183 aa). Residues 19-24 and 136-139 contribute to the GTP site; these read DHGKST and NKID.

This sequence belongs to the TRAFAC class translation factor GTPase superfamily. Classic translation factor GTPase family. LepA subfamily.

It is found in the cell membrane. The enzyme catalyses GTP + H2O = GDP + phosphate + H(+). Required for accurate and efficient protein synthesis under certain stress conditions. May act as a fidelity factor of the translation reaction, by catalyzing a one-codon backward translocation of tRNAs on improperly translocated ribosomes. Back-translocation proceeds from a post-translocation (POST) complex to a pre-translocation (PRE) complex, thus giving elongation factor G a second chance to translocate the tRNAs correctly. Binds to ribosomes in a GTP-dependent manner. The protein is Elongation factor 4 of Clostridium tetani (strain Massachusetts / E88).